Consider the following 196-residue polypeptide: Large ribosomal subunit protein uL18 (196 aa).

The protein belongs to the universal ribosomal protein uL18 family. In terms of assembly, part of the 50S ribosomal subunit. Contacts the 5S and 23S rRNAs.

Functionally, this is one of the proteins that bind and probably mediate the attachment of the 5S RNA into the large ribosomal subunit, where it forms part of the central protuberance. The polypeptide is Large ribosomal subunit protein uL18 (Saccharolobus islandicus (strain Y.N.15.51 / Yellowstone #2) (Sulfolobus islandicus)).